We begin with the raw amino-acid sequence, 491 residues long: UDP-N-acetylmuramate--L-alanine ligase (491 aa).

Residue 126 to 132 (GTHGKTT) coordinates ATP.

Belongs to the MurCDEF family.

It is found in the cytoplasm. The catalysed reaction is UDP-N-acetyl-alpha-D-muramate + L-alanine + ATP = UDP-N-acetyl-alpha-D-muramoyl-L-alanine + ADP + phosphate + H(+). The protein operates within cell wall biogenesis; peptidoglycan biosynthesis. Cell wall formation. The sequence is that of UDP-N-acetylmuramate--L-alanine ligase from Escherichia coli (strain SMS-3-5 / SECEC).